Here is a 67-residue protein sequence, read N- to C-terminus: MERLNSKLFVENCYIMKENERLRKKAELLNQENQQLLFQLKQKLSKTKNSNNGSNNDNKSSSASGQS.

A coiled-coil region spans residues 14–59; it reads YIMKENERLRKKAELLNQENQQLLFQLKQKLSKTKNSNNGSNNDNK. Positions 42-67 are disordered; it reads QKLSKTKNSNNGSNNDNKSSSASGQS.

In terms of assembly, interacts with REV. Interacts with ATBH-8, ATBH-9, ATB-14 and ATB-15. Expressed in the adaxial epidermis of the cotyledons and leaves, and in the vascular cylinder of wild-type torpedo stage embryos. Confined in the central zone and the organizing center in the shoot apical meristem.

It is found in the nucleus. In terms of biological role, competitive inhibitor of the HD-ZIPIII transcription factors in shoot apical meristem (SAM) development. Acts by forming non-functional heterodimers. Part of a negative feedback loop. Involved in SAM development and lateral organ patterning. Essential for proper functioning of stem cells in the SAM. The protein is Protein LITTLE ZIPPER 3 of Arabidopsis thaliana (Mouse-ear cress).